The following is a 1309-amino-acid chain: Nuclear pore complex protein NUP1 (1309 aa).

Disordered stretches follow at residues 1 to 58, 83 to 118, 173 to 210, 266 to 296, 329 to 348, 384 to 417, 467 to 538, 594 to 617, and 635 to 680; these read MASA…GGGW, RKRL…HKED, AADS…GSMN, RTPF…VTPR, SKWE…SGLK, ESPL…NLVP, LGNL…EEHP, SEAM…NGSL, and SNMA…VFPN. Residues 2-677 form a 25 X 2 AA repeats of F-G region; it reads ASAARGESSN…LEEPKKPAAV (676 aa). A compositionally biased stretch (basic residues) spans 22–32; the sequence is KFRKPTARRSQ. Over residues 47 to 58 the composition is skewed to gly residues; the sequence is GLGGGDVRGGGW. Positions 91-101 are enriched in polar residues; that stretch reads TPLQSPEQQKQ. The span at 195–204 shows a compositional bias: basic and acidic residues; the sequence is PSHERDRTHP. Positions 268–283 are enriched in polar residues; it reads PFPQKSPTMSLVTKPS. Residues 396–405 are compositionally biased toward basic and acidic residues; that stretch reads KTTHTSKDSA. Composition is skewed to polar residues over residues 597-617 and 635-659; these read MPST…NGSL and SNMA…SGKP. A compositionally biased stretch (basic and acidic residues) spans 660-673; the sequence is TSEEKRIPLEEPKK. Copy 1 of the repeat occupies 711-712; sequence FG. The segment at 719–865 is disordered; sequence KPTESKKTFS…VKNATFGNTS (147 aa). 2 stretches are compositionally biased toward low complexity: residues 728 to 741 and 767 to 783; these read SNSA…TSAA and SSPS…SDNS. Residues 789–803 show a composition bias toward polar residues; sequence STVQSFAATHNSSSI. Copy 2 of the repeat occupies 804 to 805; that stretch reads FG. Residues 809–827 are compositionally biased toward low complexity; the sequence is TSNDSNSQSTSASPLSSTS. A run of 12 repeats spans residues 831-832, 861-862, 869-870, 883-884, 898-899, 927-928, 956-957, 983-984, 1004-1005, 1029-1030, 1038-1039, and 1053-1054. Positions 1004–1023 are enriched in low complexity; sequence FGAGNAQTGNTGSGTTTSTQ. Residues 1004 to 1028 form a disordered region; sequence FGAGNAQTGNTGSGTTTSTQSIPFQ. A compositionally biased stretch (low complexity) spans 1068–1086; that stretch reads TPQLSSTNSSASSSSTMSS. Residues 1068-1105 are disordered; it reads TPQLSSTNSSASSSSTMSSPLFGTSWQAPNSSPNSGPV. Repeat unit 15 spans residues 1089-1090; that stretch reads FG. The segment covering 1096-1105 has biased composition (low complexity); sequence PNSSPNSGPV. Tandem repeats lie at residues 1121 to 1122, 1137 to 1138, 1151 to 1152, 1153 to 1154, 1166 to 1167, 1177 to 1178, 1186 to 1187, 1224 to 1225, 1238 to 1239, and 1255 to 1256. The tract at residues 1278 to 1309 is disordered; that stretch reads FQGGGSFSLGSTGGGDKSGRRIFKAKKSTRKK. The segment covering 1279–1293 has biased composition (gly residues); that stretch reads QGGGSFSLGSTGGGD. Residues 1297-1309 are compositionally biased toward basic residues; that stretch reads RRIFKAKKSTRKK.

In terms of assembly, part of the nuclear pore complex (NPC). The NPC has an eight-fold symmetrical structure comprising a central transport channel and two rings, the cytoplasmic and nuclear rings, to which eight filaments are attached. The cytoplasmic filaments have loose ends, while the nuclear filaments are joined in a distal ring, forming a nuclear basket. NPCs are highly dynamic in configuration and composition, and can be devided in 3 subcomplexes, the NUP62 subcomplex, the NUP107-160 subcomplex and the NUP93 subcomplex, containing approximately 30 different nucleoporin proteins. Interacts with EER5, anchoring the TREX-2 complex on the nuclear pore complex. Interacts with UCH1 and UCH2.

Its subcellular location is the nucleus envelope. It localises to the nucleus. The protein localises to the nuclear pore complex. It is found in the cytoplasm. The protein resides in the cytosol. In terms of biological role, nucleoporin required for nuclear mRNA export. Functions as an adapter and/or regulator molecule in the periphery of the nuclear pore complex (NPC). May interact with importin proteins and mediate active nucleocytoplasmic transport through the NPC. Involved in regulation of nuclear morphology. The protein is Nuclear pore complex protein NUP1 of Arabidopsis thaliana (Mouse-ear cress).